Consider the following 47-residue polypeptide: Photosystem II reaction center protein K (47 aa).

Residues Met-1–Ala-10 constitute a propeptide that is removed on maturation. A helical membrane pass occupies residues Phe-19 to Val-39.

This sequence belongs to the PsbK family. As to quaternary structure, PSII is composed of 1 copy each of membrane proteins PsbA, PsbB, PsbC, PsbD, PsbE, PsbF, PsbH, PsbI, PsbJ, PsbK, PsbL, PsbM, PsbT, PsbX, PsbY, PsbZ, Psb30/Ycf12, peripheral proteins PsbO, CyanoQ (PsbQ), PsbU, PsbV and a large number of cofactors. It forms dimeric complexes.

It localises to the cellular thylakoid membrane. One of the components of the core complex of photosystem II (PSII). PSII is a light-driven water:plastoquinone oxidoreductase that uses light energy to abstract electrons from H(2)O, generating O(2) and a proton gradient subsequently used for ATP formation. It consists of a core antenna complex that captures photons, and an electron transfer chain that converts photonic excitation into a charge separation. The chain is Photosystem II reaction center protein K from Synechococcus sp. (strain CC9311).